The following is a 341-amino-acid chain: N-acetyl-gamma-glutamyl-phosphate reductase (341 aa).

Cys-149 is a catalytic residue.

The protein belongs to the NAGSA dehydrogenase family. Type 1 subfamily.

Its subcellular location is the cytoplasm. The catalysed reaction is N-acetyl-L-glutamate 5-semialdehyde + phosphate + NADP(+) = N-acetyl-L-glutamyl 5-phosphate + NADPH + H(+). The protein operates within amino-acid biosynthesis; L-arginine biosynthesis; N(2)-acetyl-L-ornithine from L-glutamate: step 3/4. Functionally, catalyzes the NADPH-dependent reduction of N-acetyl-5-glutamyl phosphate to yield N-acetyl-L-glutamate 5-semialdehyde. This is N-acetyl-gamma-glutamyl-phosphate reductase from Methanocaldococcus jannaschii (strain ATCC 43067 / DSM 2661 / JAL-1 / JCM 10045 / NBRC 100440) (Methanococcus jannaschii).